A 50-amino-acid polypeptide reads, in one-letter code: MTETIKKSGRGVNECKRCGRKQGLVRKYDIYLCRHCFREIAHEMGFEKYS.

4 residues coordinate Zn(2+): Cys-15, Cys-18, Cys-33, and Cys-36.

Belongs to the universal ribosomal protein uS14 family. Zinc-binding uS14 subfamily. As to quaternary structure, part of the 30S ribosomal subunit. Zn(2+) serves as cofactor.

Its function is as follows. Binds 16S rRNA, required for the assembly of 30S particles. This Methanosarcina acetivorans (strain ATCC 35395 / DSM 2834 / JCM 12185 / C2A) protein is Small ribosomal subunit protein uS14.